The primary structure comprises 261 residues: Prostatic glandular kallikrein-6 (261 aa).

The N-terminal stretch at methionine 1–alanine 18 is a signal peptide. A propeptide spans proline 19 to arginine 24 (activation peptide). In terms of domain architecture, Peptidase S1 spans isoleucine 25–lysine 258. 5 disulfide bridges follow: cysteine 31–cysteine 173, cysteine 50–cysteine 66, cysteine 152–cysteine 219, cysteine 184–cysteine 198, and cysteine 209–cysteine 234. The active-site Charge relay system is the histidine 65. Asparagine 108 carries N-linked (GlcNAc...) asparagine glycosylation. The active-site Charge relay system is the aspartate 120. Serine 213 serves as the catalytic Charge relay system.

It belongs to the peptidase S1 family. Kallikrein subfamily.

It carries out the reaction Preferential cleavage of Arg-|-Xaa bonds in small molecule substrates. Highly selective action to release kallidin (lysyl-bradykinin) from kininogen involves hydrolysis of Met-|-Xaa or Leu-|-Xaa.. Glandular kallikreins cleave Met-Lys and Arg-Ser bonds in kininogen to release Lys-bradykinin. The chain is Prostatic glandular kallikrein-6 (Klk6) from Rattus norvegicus (Rat).